Reading from the N-terminus, the 260-residue chain is Pyridoxine 5'-phosphate synthase (260 aa).

Asn-15 lines the 3-amino-2-oxopropyl phosphate pocket. 17–18 contacts 1-deoxy-D-xylulose 5-phosphate; that stretch reads DH. Arg-26 contributes to the 3-amino-2-oxopropyl phosphate binding site. The active-site Proton acceptor is the His-51. 1-deoxy-D-xylulose 5-phosphate contacts are provided by Arg-53 and His-58. The Proton acceptor role is filled by Glu-78. Thr-108 provides a ligand contact to 1-deoxy-D-xylulose 5-phosphate. His-199 acts as the Proton donor in catalysis. 3-amino-2-oxopropyl phosphate is bound by residues Gly-200 and 221-222; that span reads GH.

This sequence belongs to the PNP synthase family. In terms of assembly, homooctamer; tetramer of dimers.

The protein localises to the cytoplasm. The enzyme catalyses 3-amino-2-oxopropyl phosphate + 1-deoxy-D-xylulose 5-phosphate = pyridoxine 5'-phosphate + phosphate + 2 H2O + H(+). The protein operates within cofactor biosynthesis; pyridoxine 5'-phosphate biosynthesis; pyridoxine 5'-phosphate from D-erythrose 4-phosphate: step 5/5. Catalyzes the complicated ring closure reaction between the two acyclic compounds 1-deoxy-D-xylulose-5-phosphate (DXP) and 3-amino-2-oxopropyl phosphate (1-amino-acetone-3-phosphate or AAP) to form pyridoxine 5'-phosphate (PNP) and inorganic phosphate. The chain is Pyridoxine 5'-phosphate synthase from Cupriavidus pinatubonensis (strain JMP 134 / LMG 1197) (Cupriavidus necator (strain JMP 134)).